We begin with the raw amino-acid sequence, 375 residues long: Glutamate 5-kinase (375 aa).

ATP is bound at residue K17. Residues S58, D145, and N157 each contribute to the substrate site. ATP contacts are provided by residues 177 to 178 and 219 to 225; these read SD and TGGMVTK. In terms of domain architecture, PUA spans 281-359; that stretch reads QGALTLDDGA…RELARELGPA (79 aa).

The protein belongs to the glutamate 5-kinase family.

Its subcellular location is the cytoplasm. It catalyses the reaction L-glutamate + ATP = L-glutamyl 5-phosphate + ADP. Its pathway is amino-acid biosynthesis; L-proline biosynthesis; L-glutamate 5-semialdehyde from L-glutamate: step 1/2. Its function is as follows. Catalyzes the transfer of a phosphate group to glutamate to form L-glutamate 5-phosphate. In Streptomyces avermitilis (strain ATCC 31267 / DSM 46492 / JCM 5070 / NBRC 14893 / NCIMB 12804 / NRRL 8165 / MA-4680), this protein is Glutamate 5-kinase.